The chain runs to 139 residues: Histone H2B (139 aa).

Over residues 1–10 (MAPKVAEKKP) the composition is skewed to basic and acidic residues. The segment at 1-47 (MAPKVAEKKPSLAGKAPAGKAPAEKKEAGKKTTTATGEKKKRTKARK) is disordered. N6-acetyllysine; alternate occurs at positions 8 and 9. Residues Lys8 and Lys9 each participate in a glycyl lysine isopeptide (Lys-Gly) (interchain with G-Cter in SUMO); alternate cross-link. Lys15 is subject to N6-acetyllysine. An N6-acetyllysine; alternate modification is found at Lys25. Lys25 is covalently cross-linked (Glycyl lysine isopeptide (Lys-Gly) (interchain with G-Cter in SUMO); alternate). Lys26 participates in a covalent cross-link: Glycyl lysine isopeptide (Lys-Gly) (interchain with G-Cter in SUMO). Residue Lys133 forms a Glycyl lysine isopeptide (Lys-Gly) (interchain with G-Cter in ubiquitin) linkage.

This sequence belongs to the histone H2B family. The nucleosome is a histone octamer containing two molecules each of H2A, H2B, H3 and H4 assembled in one H3-H4 heterotetramer and two H2A-H2B heterodimers. The octamer wraps approximately 147 bp of DNA. Post-translationally, monoubiquitinated by the UBC2-BRE1 complex to form H2BK123ub1. H2BK123ub1 gives a specific tag for epigenetic transcriptional activation and is also prerequisite for H3K4me and H3K79me formation. H2BK123ub1 also modulates the formation of double-strand breaks during meiosis and is a prerequisite for DNA-damage checkpoint activation. Acetylated by GCN5 to form H2BK11ac and H2BK16ac. H2BK16ac can also be formed by ESA1. Acetylation of N-terminal lysines and particularly formation of H2BK11acK16ac has a positive effect on transcription. In terms of processing, sumoylation to form H2BK6su or H2BK7su, and probably also H2BK16su or H2BK17su, occurs preferentially near the telomeres and represses gene transcription.

Its subcellular location is the nucleus. It is found in the chromosome. In terms of biological role, core component of nucleosome. Nucleosomes wrap and compact DNA into chromatin, limiting DNA accessibility to the cellular machineries which require DNA as a template. Histones thereby play a central role in transcription regulation, DNA repair, DNA replication and chromosomal stability. DNA accessibility is regulated via a complex set of post-translational modifications of histones, also called histone code, and nucleosome remodeling. In Yarrowia lipolytica (strain CLIB 122 / E 150) (Yeast), this protein is Histone H2B (HTB1).